Reading from the N-terminus, the 189-residue chain is Thymidine kinase (189 aa).

ATP-binding positions include Gly-9–Thr-16 and Asp-85–Gln-88. The active-site Proton acceptor is Glu-86. The Zn(2+) site is built by Cys-143, Cys-146, Cys-180, and His-183.

The protein belongs to the thymidine kinase family. As to quaternary structure, homotetramer.

The protein resides in the cytoplasm. It carries out the reaction thymidine + ATP = dTMP + ADP + H(+). The polypeptide is Thymidine kinase (Streptococcus pyogenes serotype M18 (strain MGAS8232)).